A 488-amino-acid polypeptide reads, in one-letter code: Splicing factor U2AF 65 kDa subunit (488 aa).

Basic and acidic residues-rich tracts occupy residues L25–R55 and D78–F129. A disordered region spans residues L25 to P133. RRM domains are found at residues R175–D257, N282–A359, and E389–V479.

This sequence belongs to the splicing factor SR family. In terms of assembly, forms a heterodimer with the U2AF small subunit.

The protein resides in the nucleus. Functionally, necessary for the splicing of pre-mRNA. Binds to the polypyrimidine tract of introns early during spliceosome assembly. The sequence is that of Splicing factor U2AF 65 kDa subunit (uaf-1) from Caenorhabditis briggsae.